The following is a 338-amino-acid chain: tRNA N6-adenosine threonylcarbamoyltransferase (338 aa).

Residues His-111 and His-115 each contribute to the Fe cation site. Substrate is bound by residues 134 to 138 (LVSGG), Asp-167, Gly-180, and Asn-272. Asp-300 serves as a coordination point for Fe cation.

The protein belongs to the KAE1 / TsaD family. Requires Fe(2+) as cofactor.

The protein resides in the cytoplasm. The enzyme catalyses L-threonylcarbamoyladenylate + adenosine(37) in tRNA = N(6)-L-threonylcarbamoyladenosine(37) in tRNA + AMP + H(+). Its function is as follows. Required for the formation of a threonylcarbamoyl group on adenosine at position 37 (t(6)A37) in tRNAs that read codons beginning with adenine. Is involved in the transfer of the threonylcarbamoyl moiety of threonylcarbamoyl-AMP (TC-AMP) to the N6 group of A37, together with TsaE and TsaB. TsaD likely plays a direct catalytic role in this reaction. The protein is tRNA N6-adenosine threonylcarbamoyltransferase of Shewanella denitrificans (strain OS217 / ATCC BAA-1090 / DSM 15013).